A 106-amino-acid polypeptide reads, in one-letter code: Oncosphere antigen B (106 aa).

One can recognise a Fibronectin type-III domain in the interval 11 to 106 (LPQHFRWSQV…QSELRSMCIK (96 aa)).

The chain is Oncosphere antigen B (ONCB) from Hydatigena taeniaeformis (Feline tapeworm).